The primary structure comprises 88 residues: MAASRLPPATLTLKQFMRRQQVLLLYRKILRAIKQIPSDSDRKYLQDWAREEFKRNKSATEEDTIRMMITQGNMQLKELERTLALAKS.

The transit peptide at 1–19 (MAASRLPPATLTLKQFMRR) directs the protein to the mitochondrion.

This sequence belongs to the complex I LYR family.

It is found in the mitochondrion. Its function is as follows. Involved in efficient integration of the N-module into mitochondrial respiratory chain complex I. This Rattus norvegicus (Rat) protein is LYR motif-containing protein 2 (Lyrm2).